The chain runs to 254 residues: NH(3)-dependent NAD(+) synthetase (254 aa).

An ATP-binding site is contributed by 29–36; it reads GLSGGIDS. Position 35 (aspartate 35) interacts with Mg(2+). Arginine 115 contributes to the deamido-NAD(+) binding site. Threonine 135 is an ATP binding site. Glutamate 140 contacts Mg(2+). Deamido-NAD(+) is bound by residues lysine 148 and aspartate 155. The ATP site is built by lysine 164 and serine 186. Deamido-NAD(+) is bound at residue 245–246; the sequence is HK.

This sequence belongs to the NAD synthetase family. Homodimer.

The enzyme catalyses deamido-NAD(+) + NH4(+) + ATP = AMP + diphosphate + NAD(+) + H(+). The protein operates within cofactor biosynthesis; NAD(+) biosynthesis; NAD(+) from deamido-NAD(+) (ammonia route): step 1/1. Catalyzes the ATP-dependent amidation of deamido-NAD to form NAD. Uses ammonia as a nitrogen source. The polypeptide is NH(3)-dependent NAD(+) synthetase (Methanococcus aeolicus (strain ATCC BAA-1280 / DSM 17508 / OCM 812 / Nankai-3)).